The following is a 310-amino-acid chain: tRNA-cytidine(32) 2-sulfurtransferase (310 aa).

The PP-loop motif signature appears at S45–S50. [4Fe-4S] cluster-binding residues include C120, C123, and C211.

It belongs to the TtcA family. As to quaternary structure, homodimer. Mg(2+) serves as cofactor. The cofactor is [4Fe-4S] cluster.

The protein resides in the cytoplasm. The catalysed reaction is cytidine(32) in tRNA + S-sulfanyl-L-cysteinyl-[cysteine desulfurase] + AH2 + ATP = 2-thiocytidine(32) in tRNA + L-cysteinyl-[cysteine desulfurase] + A + AMP + diphosphate + H(+). It participates in tRNA modification. Functionally, catalyzes the ATP-dependent 2-thiolation of cytidine in position 32 of tRNA, to form 2-thiocytidine (s(2)C32). The sulfur atoms are provided by the cysteine/cysteine desulfurase (IscS) system. The sequence is that of tRNA-cytidine(32) 2-sulfurtransferase from Shewanella oneidensis (strain ATCC 700550 / JCM 31522 / CIP 106686 / LMG 19005 / NCIMB 14063 / MR-1).